The chain runs to 201 residues: L(+)-tartrate dehydratase subunit beta (201 aa).

Residue His-37 is part of the active site.

Belongs to the class-I fumarase family. Heterotetramer of two alpha and two beta subunits.

The catalysed reaction is (2R,3R)-tartrate = oxaloacetate + H2O. This Escherichia coli O6:K15:H31 (strain 536 / UPEC) protein is L(+)-tartrate dehydratase subunit beta (ttdB).